The chain runs to 587 residues: Trans-activating transcriptional regulatory protein (587 aa).

It belongs to the nucleopolyhedrovirus IE-1 protein family.

Its function is as follows. Regulatory transcriptional protein, which trans-activates gene expression from early baculovirus promoters. Can also trans-activate its own promoter, suggesting that it is autoregulated during normal infection of insect cells. This Bombyx mori nuclear polyhedrosis virus (BmNPV) protein is Trans-activating transcriptional regulatory protein (IE1).